The primary structure comprises 232 residues: Clarin-2 (232 aa).

4 consecutive transmembrane segments (helical) span residues 8 to 28 (VWYGLASLLSFSSFLLIIVAL), 101 to 121 (ILLLLFLALALALVSMGFAIL), 139 to 159 (LWNVLAGGVVALAIGSFMAAV), and 188 to 208 (SFWICVASASAHAANLVVVAI).

Belongs to the clarin family. Detected in inner ear, particularly in hair bundles of auditory hair cells and is enriched in apical stereocilia. Detected in eye, but not in brain or muscle.

It localises to the cell projection. Its subcellular location is the stereocilium membrane. Functionally, plays a key role to hearing function. Required for normal organization and maintenance of the stereocilia bundle and for mechano-electrical transduction. This chain is Clarin-2, found in Mus musculus (Mouse).